Reading from the N-terminus, the 134-residue chain is Arsenate reductase (134 aa).

Catalysis depends on nucleophile residues C11, C83, and C90. Disulfide bonds link C11/C83 and C83/C90.

It belongs to the low molecular weight phosphotyrosine protein phosphatase family. Thioredoxin-coupled ArsC subfamily.

The protein resides in the cytoplasm. It carries out the reaction arsenate + [thioredoxin]-dithiol + H(+) = arsenite + [thioredoxin]-disulfide + H2O. Its function is as follows. Catalyzes the reduction of arsenate [As(V)] to arsenite [As(III)]. This chain is Arsenate reductase, found in Bacillus cereus (strain 03BB102).